The primary structure comprises 175 residues: Sec-independent protein translocase protein TatB (175 aa).

The helical transmembrane segment at 1-21 threads the bilayer; it reads MLDLGLSKMALIGVVALVVLG. The segment covering 94–115 has biased composition (low complexity); sequence SAVSPGGSAAADAPDGPSAASG. Disordered regions lie at residues 94-118 and 153-175; these read SAVS…GEPS and VQSG…ARFL. Residues 160–175 are compositionally biased toward basic residues; sequence VARHRPASLRRPARFL.

It belongs to the TatB family. In terms of assembly, the Tat system comprises two distinct complexes: a TatABC complex, containing multiple copies of TatA, TatB and TatC subunits, and a separate TatA complex, containing only TatA subunits. Substrates initially bind to the TatABC complex, which probably triggers association of the separate TatA complex to form the active translocon.

The protein localises to the cell inner membrane. Its function is as follows. Part of the twin-arginine translocation (Tat) system that transports large folded proteins containing a characteristic twin-arginine motif in their signal peptide across membranes. Together with TatC, TatB is part of a receptor directly interacting with Tat signal peptides. TatB may form an oligomeric binding site that transiently accommodates folded Tat precursor proteins before their translocation. This is Sec-independent protein translocase protein TatB from Burkholderia pseudomallei (strain 1106a).